The primary structure comprises 367 residues: tRNA/tmRNA (uracil-C(5))-methyltransferase (367 aa).

Positions 190, 218, 223, 239, and 299 each coordinate S-adenosyl-L-methionine. Cys324 serves as the catalytic Nucleophile. The active-site Proton acceptor is the Glu358.

This sequence belongs to the class I-like SAM-binding methyltransferase superfamily. RNA M5U methyltransferase family. TrmA subfamily.

It carries out the reaction uridine(54) in tRNA + S-adenosyl-L-methionine = 5-methyluridine(54) in tRNA + S-adenosyl-L-homocysteine + H(+). The enzyme catalyses uridine(341) in tmRNA + S-adenosyl-L-methionine = 5-methyluridine(341) in tmRNA + S-adenosyl-L-homocysteine + H(+). Functionally, dual-specificity methyltransferase that catalyzes the formation of 5-methyluridine at position 54 (m5U54) in all tRNAs, and that of position 341 (m5U341) in tmRNA (transfer-mRNA). This chain is tRNA/tmRNA (uracil-C(5))-methyltransferase, found in Pectobacterium carotovorum subsp. carotovorum (strain PC1).